The sequence spans 80 residues: Conotoxin VnMSGL-0123 (80 aa).

A signal peptide spans 1–20 (MSGLGIMVLTLLLLVSMATS). A propeptide spanning residues 21–44 (HQDGGGKQATQRDAINVRRRRSIT) is cleaved from the precursor. Cystine bridges form between Cys-53/Cys-65, Cys-57/Cys-74, and Cys-64/Cys-78. Phenylalanine amide is present on Phe-79.

Belongs to the conotoxin O3 superfamily. As to expression, expressed by the venom duct.

It is found in the secreted. The sequence is that of Conotoxin VnMSGL-0123 from Conus ventricosus (Mediterranean cone).